Here is a 718-residue protein sequence, read N- to C-terminus: MAEVDKSISFDGRDIRLKVGLLAPQAGGSVLIESGDTSVLVTATRSQAREGIDFLPLTVDYEERLYAAGRIPGGIMRREGRPPEKTILTSRLIDRPMRPLFPSWLRDDLQIIALTLSMDELVPPDVLAVTGASIATLIAQIPFNGPMAAVRVGLVGDDFIINPTYAEIEAGDLDLVVAGSPHGVIMVEAGANQLPERDIIEAIDFGYEAVRDLIKAQQDLVAELGLVIVQEAPPEVDQTLENYIRDRASGQIKKILSQFTFTKPERDAALDVVKDEIATTIKELPEEDPIRVAATANNKALGNTFKDITKYFMRRQIIEDNVRVDGRKLDEVRRVSCLVGVLPKRVHGSGLFNRELTQVLSTCTLGTPGDAQNLNDDMQLDQHKRYLHHYNFPPFSVGETKPMRSPGRREIGHGALAERSLIPVLPSKEQFPYVIRIVSEVLSSNGSTSMGSVCGSTLALMDAGVPILKPVSGAAMGLIKDGDEVRILTDIQGIEDFLGDMDFKVAGTDTGITALQMDMKIPGLSLDVISQAVHQAKAARLHILEKMLACIDTPRIETSPYAPRLLTIKIDSDMIGLVIGPGGKTIKGITEETGAKIDIEDDGTVTISAVDENKAKRARNIIQGMTRKLHEGDVYAGRITRIIPIGAFVEFLPGKEGMIHISQLADYRVGKVEDEVAVGDEVIIKVREIDNKGRINLTRLGIHPDQAAAAREAAAVNR.

Mg(2+)-binding residues include Asp496 and Asp502. The KH domain maps to 563–622 (PRLLTIKIDSDMIGLVIGPGGKTIKGITEETGAKIDIEDDGTVTISAVDENKAKRARNII). The S1 motif domain occupies 632-700 (GDVYAGRITR…NKGRINLTRL (69 aa)).

It belongs to the polyribonucleotide nucleotidyltransferase family. It depends on Mg(2+) as a cofactor.

It localises to the cytoplasm. It carries out the reaction RNA(n+1) + phosphate = RNA(n) + a ribonucleoside 5'-diphosphate. Functionally, involved in mRNA degradation. Catalyzes the phosphorolysis of single-stranded polyribonucleotides processively in the 3'- to 5'-direction. This chain is Polyribonucleotide nucleotidyltransferase, found in Nostoc punctiforme (strain ATCC 29133 / PCC 73102).